Here is a 374-residue protein sequence, read N- to C-terminus: Pectate lyase 3 (374 aa).

Residues 1–22 form the signal peptide; sequence MKYLLPSTAAGLLLLAAQPTMA. A disulfide bridge connects residues Cys93 and Cys176. Positions 150, 152, 187, and 191 each coordinate Ca(2+). Residue Arg239 is part of the active site. Cys350 and Cys373 are oxidised to a cystine.

This sequence belongs to the polysaccharide lyase 1 family. PLADES subfamily. Requires Ca(2+) as cofactor.

The protein resides in the secreted. The enzyme catalyses Eliminative cleavage of (1-&gt;4)-alpha-D-galacturonan to give oligosaccharides with 4-deoxy-alpha-D-galact-4-enuronosyl groups at their non-reducing ends.. It participates in glycan metabolism; pectin degradation; 2-dehydro-3-deoxy-D-gluconate from pectin: step 2/5. In terms of biological role, involved in maceration and soft-rotting of plant tissue. The protein is Pectate lyase 3 (pel3) of Pectobacterium atrosepticum (strain SCRI 1043 / ATCC BAA-672) (Erwinia carotovora subsp. atroseptica).